Here is a 473-residue protein sequence, read N- to C-terminus: Photosystem II CP43 reaction center protein (473 aa).

A propeptide spanning residues 1–14 (MKTLYSLRRFYPVE) is cleaved from the precursor. An N-acetylthreonine modification is found at threonine 15. Threonine 15 carries the phosphothreonine modification. A run of 5 helical transmembrane segments spans residues 69 to 93 (LFEVAHFVPEKPMYEQGLILLPHLA), 134 to 155 (LLGPETLEESFPFFGYVWKDRN), 178 to 200 (KALYFGGVYDTWAPGGGDVRKIT), 255 to 275 (KPFAWARRAFVWSGEAYLSYS), and 291 to 312 (WFNNTAYPSEFYGPTGPEASQA). [CaMn4O5] cluster is bound at residue glutamate 367. A helical membrane pass occupies residues 447-471 (RARAAAAGFEKGIDRDLEPVLSMTP).

This sequence belongs to the PsbB/PsbC family. PsbC subfamily. In terms of assembly, PSII is composed of 1 copy each of membrane proteins PsbA, PsbB, PsbC, PsbD, PsbE, PsbF, PsbH, PsbI, PsbJ, PsbK, PsbL, PsbM, PsbT, PsbX, PsbY, PsbZ, Psb30/Ycf12, at least 3 peripheral proteins of the oxygen-evolving complex and a large number of cofactors. It forms dimeric complexes. Binds multiple chlorophylls and provides some of the ligands for the Ca-4Mn-5O cluster of the oxygen-evolving complex. It may also provide a ligand for a Cl- that is required for oxygen evolution. PSII binds additional chlorophylls, carotenoids and specific lipids. is required as a cofactor.

Its subcellular location is the plastid. The protein localises to the chloroplast thylakoid membrane. Functionally, one of the components of the core complex of photosystem II (PSII). It binds chlorophyll and helps catalyze the primary light-induced photochemical processes of PSII. PSII is a light-driven water:plastoquinone oxidoreductase, using light energy to abstract electrons from H(2)O, generating O(2) and a proton gradient subsequently used for ATP formation. The chain is Photosystem II CP43 reaction center protein from Acorus calamus var. americanus (American sweet flag).